Here is a 166-residue protein sequence, read N- to C-terminus: MPDATLPACFLSLLAFTSACYFQNCPRGGKRAMSDLELRQCLPCGPGGKGRCFGPSICCGDELGCFVGTAEALRCQEENYLPSPCQSGQKPCGSGGRCAAAGICCNDESCVTEPECREGVGFPRRVRANDRSNATLLDGPSGALLLRLVQLAGAPEPAEPAQPGVY.

An N-terminal signal peptide occupies residues 1–19; that stretch reads MPDATLPACFLSLLAFTSA. Cysteines 20 and 25 form a disulfide. The residue at position 28 (Gly28) is a Glycine amide. Disulfide bonds link Cys41–Cys85, Cys44–Cys58, Cys52–Cys75, Cys59–Cys65, Cys92–Cys104, Cys98–Cys116, and Cys105–Cys110. Residue Asn133 is glycosylated (N-linked (GlcNAc...) asparagine).

Belongs to the vasopressin/oxytocin family. As to quaternary structure, interacts with vasopressin receptors V1bR/AVPR1B (Ki=85 pM), V1aR/AVPR1A (Ki=0.6 nM) and V2R/AVPR2 (Ki=4.9 nM). Interacts with oxytocin receptor (OXTR) (Ki=110 nM).

It localises to the secreted. Functionally, neurophysin 2 specifically binds vasopressin. Its function is as follows. Vasopressin has a direct antidiuretic action on the kidney, it also causes vasoconstriction of the peripheral vessels. Acts by binding to vasopressin receptors (V1bR/AVPR1B, V1aR/AVPR1A, and V2R/AVPR2). In Bos taurus (Bovine), this protein is Vasopressin-neurophysin 2-copeptin (AVP).